The following is a 542-amino-acid chain: Chaperonin GroEL (542 aa).

ATP contacts are provided by residues 29–32 (TMGP), 86–90 (DGTTT), Gly413, 476–478 (NAA), and Asp492. Residues 521–542 (KPDPNANNQAPAAPQGGMGGMM) are disordered. The segment covering 524-535 (PNANNQAPAAPQ) has biased composition (low complexity).

Belongs to the chaperonin (HSP60) family. As to quaternary structure, forms a cylinder of 14 subunits composed of two heptameric rings stacked back-to-back. Interacts with the co-chaperonin GroES.

The protein localises to the cytoplasm. It catalyses the reaction ATP + H2O + a folded polypeptide = ADP + phosphate + an unfolded polypeptide.. Together with its co-chaperonin GroES, plays an essential role in assisting protein folding. The GroEL-GroES system forms a nano-cage that allows encapsulation of the non-native substrate proteins and provides a physical environment optimized to promote and accelerate protein folding. In Limosilactobacillus reuteri subsp. reuteri (strain JCM 1112) (Lactobacillus reuteri), this protein is Chaperonin GroEL.